Consider the following 619-residue polypeptide: MYGFVNHALELLVIRNYGPEVWEDIKKEAQLDEEGQFLVRIIYDDSKTYDLVAAASKVLNLNAGEILQMFGKMFFVFCQESGYDTILRVLGSNVREFLQNLDALHDHLATIYPGMRAPSFRCTDAEKGKGLILHYYSEREGLQDIVIGIIKTVAQQIHGTEIDMKVIQQRNEECDHTQFLIEEKESKEEDFYEDLDRFEENGTQESRISPYTFCKAFPFHIIFDRDLVVTQCGNAIYRVLPQLQPGNCSLLSVFSLVRPHIDISFHGILSHINTVFVLRSKEGLLDVEKLECEDELTGTEISCLRLKGQMIYLPEADSILFLCSPSVMNLDDLTRRGLYLSDIPLHDATRDLVLLGEQFREEYKLTQELEILTDRLQLTLRALEDEKKKTDTLLYSVLPPSVANELRHKRPVPAKRYDNVTILFSGIVGFNAFCSKHASGEGAMKIVNLLNDLYTRFDTLTDSRKNPFVYKVETVGDKYMTVSGLPEPCIHHARSICHLALDMMEIAGQVQVDGESVQITIGIHTGEVVTGVIGQRMPRYCLFGNTVNLTSRTETTGEKGKINVSEYTYRCLMSPENSDPQFHLEHRGPVSMKGKKEPMQVWFLSRKNTGTEETKQDDD.

A heme-binding site is contributed by His-105. A Guanylate cyclase domain is found at 421 to 554 (TILFSGIVGF…NTVNLTSRTE (134 aa)).

The protein belongs to the adenylyl cyclase class-4/guanylyl cyclase family. As to quaternary structure, the active enzyme is formed by a heterodimer of an alpha and a beta subunit. Heterodimer with GUCY1A1. Can also form inactive homodimers in vitro. Requires heme as cofactor. Detected in brain cortex and cerebellum (at protein level).

It localises to the cytoplasm. It catalyses the reaction GTP = 3',5'-cyclic GMP + diphosphate. Its activity is regulated as follows. Activated by nitric oxide in the presence of magnesium or manganese ions. In terms of biological role, mediates responses to nitric oxide (NO) by catalyzing the biosynthesis of the signaling molecule cGMP. This is Guanylate cyclase soluble subunit beta-1 from Homo sapiens (Human).